Consider the following 302-residue polypeptide: Protoheme IX farnesyltransferase (302 aa).

Helical transmembrane passes span 24–44, 48–68, 97–117, 120–140, 147–167, 174–194, 221–241, 245–265, and 282–302; these read VVSL…FSGY, FFSV…AGAL, AALV…ELAV, LSAV…TVYL, NIVV…AAVA, SLVL…ALAL, ILCY…LRFS, YMIV…NVYL, and FLLF…GMLI.

It belongs to the UbiA prenyltransferase family. Protoheme IX farnesyltransferase subfamily.

It localises to the cell inner membrane. The catalysed reaction is heme b + (2E,6E)-farnesyl diphosphate + H2O = Fe(II)-heme o + diphosphate. It participates in porphyrin-containing compound metabolism; heme O biosynthesis; heme O from protoheme: step 1/1. Its function is as follows. Converts heme B (protoheme IX) to heme O by substitution of the vinyl group on carbon 2 of heme B porphyrin ring with a hydroxyethyl farnesyl side group. The chain is Protoheme IX farnesyltransferase from Neorickettsia sennetsu (strain ATCC VR-367 / Miyayama) (Ehrlichia sennetsu).